The primary structure comprises 1431 residues: Probable serine/threonine-protein kinase irlA (1431 aa).

Residues 1 to 10 are compositionally biased toward basic residues; the sequence is MTKPIFKSKT. Disordered regions lie at residues 1–81 and 736–879; these read MTKP…EKEE and KREK…NNNK. Positions 25-43 are enriched in acidic residues; it reads NEDEEEEEGGEEGGEEEEI. The span at 46 to 67 shows a compositional bias: low complexity; sequence NKNSNNSSSNSNNNNNDNNNNN. 2 coiled-coil regions span residues 57 to 97 and 715 to 759; these read NNNN…LDME and KKRS…NNNN. Positions 68 to 81 are enriched in basic and acidic residues; sequence GEERKVEKEEEKEE. Basic residues predominate over residues 738–749; sequence EKKKQKDKKKNK. Residues 750–776 show a composition bias toward low complexity; it reads SNQNQKNNNNQNNQSNNNKINSPSSNK. Positions 777–791 are enriched in polar residues; the sequence is LTQNVTPPSSPVNII. A compositionally biased stretch (low complexity) spans 792–812; it reads TSSSTTSSSTSSTTSSTTSST. Over residues 821-838 the composition is skewed to polar residues; the sequence is TLPIKTSSPTKPESQKPS. Residues 854–878 show a composition bias toward low complexity; sequence NNNNNNNNNNNNNNNNNNNNNNNNN. The stretch at 860 to 971 forms a coiled coil; sequence NNNNNNNNNN…QESIQLNQTL (112 aa). In terms of domain architecture, Protein kinase spans 987 to 1261; it reads RDENNIIGRG…IDTILNHPLF (275 aa). Residues 993–1001 and lysine 1016 each bind ATP; that span reads IGRGSNGTL. Aspartate 1130 acts as the Proton acceptor in catalysis. The KEN domain occupies 1264–1431; that stretch reads TNEKIKFYES…NSKDYLNIKF (168 aa).

The protein belongs to the protein kinase superfamily. Ser/Thr protein kinase family.

It carries out the reaction L-seryl-[protein] + ATP = O-phospho-L-seryl-[protein] + ADP + H(+). The enzyme catalyses L-threonyl-[protein] + ATP = O-phospho-L-threonyl-[protein] + ADP + H(+). This chain is Probable serine/threonine-protein kinase irlA (irlA), found in Dictyostelium discoideum (Social amoeba).